A 176-amino-acid polypeptide reads, in one-letter code: Cytochrome b (176 aa).

Helical transmembrane passes span 33–53, 77–98, and 113–133; these read FGSL…FLAM, WLLR…YLHV, and WNVG…GYVL. Residues His-83 and His-97 each coordinate heme b.

Belongs to the cytochrome b family. In terms of assembly, the cytochrome bc1 complex contains 11 subunits: 3 respiratory subunits (MT-CYB, CYC1 and UQCRFS1), 2 core proteins (UQCRC1 and UQCRC2) and 6 low-molecular weight proteins (UQCRH/QCR6, UQCRB/QCR7, UQCRQ/QCR8, UQCR10/QCR9, UQCR11/QCR10 and a cleavage product of UQCRFS1). This cytochrome bc1 complex then forms a dimer. It depends on heme b as a cofactor.

The protein localises to the mitochondrion inner membrane. Component of the ubiquinol-cytochrome c reductase complex (complex III or cytochrome b-c1 complex) that is part of the mitochondrial respiratory chain. The b-c1 complex mediates electron transfer from ubiquinol to cytochrome c. Contributes to the generation of a proton gradient across the mitochondrial membrane that is then used for ATP synthesis. The chain is Cytochrome b (MT-CYB) from Mormopterus kalinowskii (Kalinowski's mastiff bat).